A 201-amino-acid chain; its full sequence is Cytochrome c biogenesis ATP-binding export protein CcmA (201 aa).

The ABC transporter domain occupies 3-200 (LIAENLGGER…EGAELRMGVA (198 aa)). 35–42 (GPNGSGKS) serves as a coordination point for ATP.

Belongs to the ABC transporter superfamily. CcmA exporter (TC 3.A.1.107) family. As to quaternary structure, the complex is composed of two ATP-binding proteins (CcmA) and two transmembrane proteins (CcmB).

It localises to the cell inner membrane. The enzyme catalyses heme b(in) + ATP + H2O = heme b(out) + ADP + phosphate + H(+). Part of the ABC transporter complex CcmAB involved in the biogenesis of c-type cytochromes; once thought to export heme, this seems not to be the case, but its exact role is uncertain. Responsible for energy coupling to the transport system. The chain is Cytochrome c biogenesis ATP-binding export protein CcmA from Mesorhizobium japonicum (strain LMG 29417 / CECT 9101 / MAFF 303099) (Mesorhizobium loti (strain MAFF 303099)).